The chain runs to 216 residues: Ras-related protein Rab-5C (216 aa).

The GTP site is built by S30, A31, G33, K34, S35, S36, H47, E48, T53, and G79. S35 serves as a coordination point for Mg(2+). 2 short sequence motifs (switch) span residues 45 to 57 (QFHE…IGAA) and 78 to 94 (AGQE…YRGA). T53 is a Mg(2+) binding site. A Phosphoserine modification is found at S85. Positions 134, 135, 137, 165, and 166 each coordinate GTP. Positions 185-216 (NEPQNAAGAPGRNRGVDLQENNPASRSQCCSN) are disordered. Polar residues predominate over residues 203-216 (QENNPASRSQCCSN). 2 S-geranylgeranyl cysteine lipidation sites follow: C213 and C214.

This sequence belongs to the small GTPase superfamily. Rab family. In terms of assembly, interacts with EEA1 and INCA1. Interacts with GDI1, GDI2, CHML and CHM; phosphorylation at Ser-85 disrupts this interaction. Mg(2+) is required as a cofactor. Phosphorylation of Ser-85 in the switch II region by LRRK2 prevents the association of RAB regulatory proteins, including CHM, CHML and RAB GDP dissociation inhibitors GDI1 and GDI2.

It is found in the cell membrane. It localises to the early endosome membrane. Its subcellular location is the melanosome. The enzyme catalyses GTP + H2O = GDP + phosphate + H(+). Regulated by guanine nucleotide exchange factors (GEFs) which promote the exchange of bound GDP for free GTP. Regulated by GTPase activating proteins (GAPs) which increase the GTP hydrolysis activity. Inhibited by GDP dissociation inhibitors (GDIs). In terms of biological role, the small GTPases Rab are key regulators of intracellular membrane trafficking, from the formation of transport vesicles to their fusion with membranes. Rabs cycle between an inactive GDP-bound form and an active GTP-bound form that is able to recruit to membranes different sets of downstream effectors directly responsible for vesicle formation, movement, tethering and fusion. This is Ras-related protein Rab-5C (RAB5C) from Bos taurus (Bovine).